Consider the following 144-residue polypeptide: MRKIDLCLSSEGSEVILATSSDEKHPPENIIDGNPETFWTTTGMFPQEFIICFHKHVRIERLVIQSYFVQTLKIEKSTSKEPVDFEQWIEKDLVHTEGQLQNEEIVAHDGSATYLRFIIVSAFDHFASVHSVSAEGTVVSNLSS.

Residues asparagine 29, aspartate 32, and threonine 37 each coordinate Ca(2+).

It belongs to the IFT25 family. In terms of assembly, component of the IFT complex B, at least composed of IFT20, IFT22, IFT25, IFT27, IFT46, IFT52, TRAF3IP1/IFT54, IFT57, IFT74, IFT80, IFT81, and IFT88. Interacts with IFT27. Interacts with IFT88. In terms of tissue distribution, detected in placenta.

Its subcellular location is the cell projection. The protein resides in the cilium. Its function is as follows. Component of the IFT complex B required for sonic hedgehog/SHH signaling. May mediate transport of SHH components: required for the export of SMO and PTCH1 receptors out of the cilium and the accumulation of GLI2 at the ciliary tip in response to activation of the SHH pathway, suggesting it is involved in the dynamic transport of SHH signaling molecules within the cilium. Not required for ciliary assembly. Its role in intraflagellar transport is mainly seen in tissues rich in ciliated cells such as kidney and testis. Essential for male fertility, spermiogenesis and sperm flagella formation. Plays a role in the early development of the kidney. May be involved in the regulation of ureteric bud initiation. The chain is Intraflagellar transport protein 25 homolog from Homo sapiens (Human).